The chain runs to 155 residues: Ribosomal RNA large subunit methyltransferase H (155 aa).

Residues L73, G104, and 123 to 128 contribute to the S-adenosyl-L-methionine site; that span reads LSPLTL.

Belongs to the RNA methyltransferase RlmH family. Homodimer.

The protein localises to the cytoplasm. It carries out the reaction pseudouridine(1915) in 23S rRNA + S-adenosyl-L-methionine = N(3)-methylpseudouridine(1915) in 23S rRNA + S-adenosyl-L-homocysteine + H(+). Specifically methylates the pseudouridine at position 1915 (m3Psi1915) in 23S rRNA. The chain is Ribosomal RNA large subunit methyltransferase H from Pseudomonas aeruginosa (strain UCBPP-PA14).